Here is a 75-residue protein sequence, read N- to C-terminus: Exodeoxyribonuclease 7 small subunit (75 aa).

Belongs to the XseB family. Heterooligomer composed of large and small subunits.

Its subcellular location is the cytoplasm. It carries out the reaction Exonucleolytic cleavage in either 5'- to 3'- or 3'- to 5'-direction to yield nucleoside 5'-phosphates.. Functionally, bidirectionally degrades single-stranded DNA into large acid-insoluble oligonucleotides, which are then degraded further into small acid-soluble oligonucleotides. The polypeptide is Exodeoxyribonuclease 7 small subunit (Chlamydia pneumoniae (Chlamydophila pneumoniae)).